A 319-amino-acid chain; its full sequence is ATP-dependent 6-phosphofructokinase (319 aa).

Residue glycine 11 participates in ATP binding. 21 to 25 (RAVVR) contributes to the ADP binding site. ATP contacts are provided by residues 72-73 (RC) and 102-105 (GDGS). A Mg(2+)-binding site is contributed by aspartate 103. 125–127 (TID) is a substrate binding site. Catalysis depends on aspartate 127, which acts as the Proton acceptor. Arginine 154 is an ADP binding site. Residues arginine 162 and 169-171 (MGR) each bind substrate. ADP contacts are provided by residues 185 to 187 (GAE), arginine 211, and 213 to 215 (KKH). Substrate-binding positions include glutamate 222, arginine 243, and 249–252 (HVQR).

The protein belongs to the phosphofructokinase type A (PFKA) family. ATP-dependent PFK group I subfamily. Prokaryotic clade 'B1' sub-subfamily. In terms of assembly, homotetramer. It depends on Mg(2+) as a cofactor.

The protein localises to the cytoplasm. The enzyme catalyses beta-D-fructose 6-phosphate + ATP = beta-D-fructose 1,6-bisphosphate + ADP + H(+). It functions in the pathway carbohydrate degradation; glycolysis; D-glyceraldehyde 3-phosphate and glycerone phosphate from D-glucose: step 3/4. Its activity is regulated as follows. Allosterically activated by ADP and other diphosphonucleosides, and allosterically inhibited by phosphoenolpyruvate. Functionally, catalyzes the phosphorylation of D-fructose 6-phosphate to fructose 1,6-bisphosphate by ATP, the first committing step of glycolysis. This Geobacillus kaustophilus (strain HTA426) protein is ATP-dependent 6-phosphofructokinase.